The following is a 1543-amino-acid chain: ABC multidrug transporter AFR1 (1543 aa).

Residues 1-85 (MSAAGVPAEL…DGKQKRLPAD (85 aa)) are disordered. Polar residues predominate over residues 18-41 (TATTQNPSGLANSQVTSGPVSSAT). Basic and acidic residues predominate over residues 62-83 (AVEAEKAEAIDAAGDGKQKRLP). N117 carries N-linked (GlcNAc...) asparagine glycosylation. Residues 119-157 (SQRSQHELHRPTTRHSVRSSFSRKDRVVSRLTQDDAEKA) form a disordered region. Residues 140 to 157 (SRKDRVVSRLTQDDAEKA) show a composition bias toward basic and acidic residues. Residues N208 and N398 are each glycosylated (N-linked (GlcNAc...) asparagine). Residues 222-474 (IKVLGIFGFN…MIGLGYRDLP (253 aa)) form the ABC transporter 1 domain. Transmembrane regions (helical) follow at residues 585–605 (FGISTGFATSIIIALIVGSVY), 619–639 (GGLLFLGLLFNALTSFSELPS), 670–690 (VPYNASVIFLFSIVLYFMGGL), 695–715 (GAFFMFFLFVFLTFMVMSAFF), and 727–747 (VAARLASVLISFMVTYTGYMI). N823 carries an N-linked (GlcNAc...) asparagine glycan. The chain crosses the membrane as a helical span at residues 845–865 (FGILLGFFTFFMFLQMLFIEV). In terms of domain architecture, ABC transporter 2 spans 918-1160 (FTWEGLSYTV…VLIDYLERNG (243 aa)). 954 to 961 (GASGAGKT) serves as a coordination point for ATP. A glycan (N-linked (GlcNAc...) asparagine) is linked at N1223. A run of 6 helical transmembrane segments spans residues 1254–1274 (WTRLFAHLAIGLIVTLTFLQL), 1285–1305 (VFAIFFATVLPALILAQIEPQ), 1336–1356 (MPYSLGCAVSFFLLLYYGVGF), 1366–1386 (FFLMILVTEVYAVTLGQAVAA), 1391–1411 (ILIAALFNPFLLVLFSIFCGV), and 1517–1537 (FGIFICYVVFNILVLLIAARF).

The protein belongs to the ABC transporter superfamily. ABCG family. PDR (TC 3.A.1.205) subfamily.

It is found in the cell membrane. The catalysed reaction is itraconazole(in) + ATP + H2O = itraconazole(out) + ADP + phosphate + H(+). It carries out the reaction voriconazole(in) + ATP + H2O = voriconazole(out) + ADP + phosphate + H(+). The enzyme catalyses fluconazole(in) + ATP + H2O = fluconazole(out) + ADP + phosphate + H(+). Major pleiotropic ABC efflux transporter that confers resistance to structurally and functionally unrelated compounds including azoles such as fluconazole (FLC), itraconazole (ITC), posaconazole (POS), and voriconazole (VRC). Is also able to efflux the eukaryote protein synthesis inhibitor cycloheximide (CHX). This chain is ABC multidrug transporter AFR1, found in Cryptococcus neoformans var. grubii serotype A (strain H99 / ATCC 208821 / CBS 10515 / FGSC 9487) (Filobasidiella neoformans var. grubii).